The following is a 768-amino-acid chain: Translation factor GUF1 homolog, mitochondrial (768 aa).

The N-terminal 29 residues, 1-29 (MRLWNRFSRLGNLLCACAACGCSFTPWRC), are a transit peptide targeting the mitochondrion. The region spanning 110–293 (SNIRNVAVVA…AIIERVPSPS (184 aa)) is the tr-type G domain. Residues 119 to 126 (AHVDHGKT), 184 to 188 (DTPGH), and 238 to 241 (TKMD) each bind GTP.

The protein belongs to the TRAFAC class translation factor GTPase superfamily. Classic translation factor GTPase family. LepA subfamily.

It localises to the mitochondrion inner membrane. It catalyses the reaction GTP + H2O = GDP + phosphate + H(+). Promotes mitochondrial protein synthesis. May act as a fidelity factor of the translation reaction, by catalyzing a one-codon backward translocation of tRNAs on improperly translocated ribosomes. Binds to mitochondrial ribosomes in a GTP-dependent manner. The protein is Translation factor GUF1 homolog, mitochondrial of Trypanosoma brucei brucei (strain 927/4 GUTat10.1).